We begin with the raw amino-acid sequence, 218 residues long: Ras-related protein Rab-27B (218 aa).

Threonine 2 carries the N-acetylthreonine modification. 16–24 (GDSGVGKTT) provides a ligand contact to GTP. Residues 38–46 (FITTVGIDF) carry the Effector region motif. GTP contacts are provided by residues 74 to 78 (DTAGQ), 133 to 136 (NKAD), and 163 to 165 (SAA). Cysteine 123 and cysteine 188 are joined by a disulfide. Residues cysteine 216 and cysteine 218 are each lipidated (S-geranylgeranyl cysteine). Cysteine 218 carries the post-translational modification Cysteine methyl ester.

This sequence belongs to the small GTPase superfamily. Rab family. In terms of assembly, interacts with SYTL2, SYTL4, MYRIP and MLPH. Interacts with RPH3A and RPH3A. Interacts (GDP-bound form preferentially) with DENND10.

Its subcellular location is the membrane. The protein localises to the late endosome. It catalyses the reaction GTP + H2O = GDP + phosphate + H(+). Its activity is regulated as follows. Regulated by guanine nucleotide exchange factors (GEFs) which promote the exchange of bound GDP for free GTP, GTPase activating proteins (GAPs) which increase the GTP hydrolysis activity, and GDP dissociation inhibitors which inhibit the dissociation of the nucleotide from the GTPase. Activated by GEFs such as DENND10. Functionally, small GTPase which cycles between active GTP-bound and inactive GDP-bound states. In its active state, binds to a variety of effector proteins to regulate homeostasis of late endocytic pathway, including endosomal positioning, maturation and secretion. Plays a role in NTRK2/TRKB axonal anterograde transport by facilitating the association of NTRK2/TRKB with KLC1. May be involved in targeting uroplakins to urothelial apical membranes. This is Ras-related protein Rab-27B (Rab27b) from Rattus norvegicus (Rat).